Consider the following 125-residue polypeptide: Glutaredoxin-C1 (125 aa).

The Glutaredoxin domain maps to 19–119; that stretch reads VNKAKEIVSA…PLLTEAGAIA (101 aa). An intrachain disulfide couples Cys-39 to Cys-42.

The protein belongs to the glutaredoxin family. CPYC subfamily.

The protein resides in the cytoplasm. Functionally, has a glutathione-disulfide oxidoreductase activity in the presence of NADPH and glutathione reductase. Reduces low molecular weight disulfides and proteins. The chain is Glutaredoxin-C1 (GRXC1) from Arabidopsis thaliana (Mouse-ear cress).